We begin with the raw amino-acid sequence, 1198 residues long: Fibronectin type-III domain-containing protein 3a (1198 aa).

The segment covering 189–201 (KLKDRHGTQKDKL) has biased composition (basic and acidic residues). The disordered stretch occupies residues 189–256 (KLKDRHGTQK…SQTDVEIEEK (68 aa)). Low complexity predominate over residues 229 to 247 (GISTGSTKSKSVGKGKSNS). Fibronectin type-III domains follow at residues 269-370 (NIAK…TMSC), 374-466 (APNL…TSGT), 470-563 (TPAS…TCPD), 567-661 (APSK…TPAV), 665-758 (PCQP…TAPG), 762-852 (QCKP…TPAS), 864-951 (SEDE…TKPL), 952-1045 (PPDP…TPKS), and 1046-1151 (VPAA…TEPP). The interval 553–574 (SETVDYTTCPDKPGAPSKPSVK) is disordered. The chain crosses the membrane as a helical span at residues 1172-1192 (VCAAVILALFAIFSILIAVII).

This sequence belongs to the FNDC3 family.

The protein resides in the golgi apparatus membrane. The sequence is that of Fibronectin type-III domain-containing protein 3a (FNDC3A) from Gallus gallus (Chicken).